Reading from the N-terminus, the 33-residue chain is Alpha-amanitin proprotein (33 aa).

Positions 1-10 (MSDINATRLP) are excised as a propeptide. Isoleucine 11 is subject to (3R,4R)-4,5-dihydroxyisoleucine; in form alpha-amanitin. Isoleucine 11 bears the (3R,4S)-4-hydroxyisoleucine; in form gamma-amanitin mark. The cyclopeptide (Ile-Pro) cross-link spans 11-18 (IWGIGCNP). The 2'-cysteinyl-6'-hydroxytryptophan sulfoxide (Trp-Cys) cross-link spans 12–16 (WGIGC). Position 18 is a 4-hydroxyproline (proline 18). The propeptide occupies 19–33 (CVGDEVTALLTRGEA).

The protein belongs to the MSDIN fungal toxin family. Processed by the macrocyclase-peptidase enzyme POPB to yield a toxic cyclic decapeptide. POPB first removes 10 residues from the N-terminus. Conformational trapping of the remaining peptide forces the enzyme to release this intermediate rather than proceed to macrocyclization. The enzyme rebinds the remaining peptide in a different conformation and catalyzes macrocyclization of the N-terminal 8 residues.

Major toxin belonging to the bicyclic octapeptides amatoxins that acts by binding non-competitively to RNA polymerase II and greatly slowing the elongation of transcripts from target promoters. This is Alpha-amanitin proprotein from Amanita fuligineoides.